The chain runs to 282 residues: uncharacterized protein (282 aa).

This is an uncharacterized protein from Escherichia coli (strain K12).